The chain runs to 334 residues: Ornithine carbamoyltransferase, catabolic (334 aa).

Residues 57–60 (STRT), Gln-84, Arg-108, and 135–138 (HPTQ) contribute to the carbamoyl phosphate site. L-ornithine-binding positions include Asn-168, Asp-232, and 236–237 (SM). Carbamoyl phosphate is bound by residues 274–275 (CL) and Arg-321.

This sequence belongs to the aspartate/ornithine carbamoyltransferase superfamily. OTCase family.

The protein resides in the cytoplasm. The catalysed reaction is carbamoyl phosphate + L-ornithine = L-citrulline + phosphate + H(+). Its pathway is amino-acid degradation; L-arginine degradation via ADI pathway; carbamoyl phosphate from L-arginine: step 2/2. Its function is as follows. Reversibly catalyzes the transfer of the carbamoyl group from carbamoyl phosphate (CP) to the N(epsilon) atom of ornithine (ORN) to produce L-citrulline. The polypeptide is Ornithine carbamoyltransferase, catabolic (arcB) (Avibacterium paragallinarum (Haemophilus gallinarum)).